Consider the following 523-residue polypeptide: Transmembrane protein 266 (523 aa).

Over 1-94 (MTNPQPAIEG…VFLLSASLNS (94 aa)) the chain is Cytoplasmic. Residues 95 to 115 (FLVACVILVVILLTLELLIDI) traverse the membrane as a helical segment. At 116-121 (KLLQFS) the chain is on the extracellular side. A helical transmembrane segment spans residues 122–142 (SAFQFAGVIHWISLVILSVFF). Residues 143 to 161 (SETVLRIVVLGIWDYIENK) are Cytoplasmic-facing. A helical membrane pass occupies residues 162-182 (IEVFDGAVIILSLAPMVASTV). Residues 183 to 191 (ANGPRSPWD) are Extracellular-facing. Residues 192 to 212 (AISLIIMLRIWRVKRVIDAYV) traverse the membrane as a helical segment. Residues 213-523 (LPVKLEMEMV…EQKLHRVPEA (311 aa)) are Cytoplasmic-facing. A coiled-coil region spans residues 218-270 (EMEMVIQQYEKAKVIQDEQLERLTQICQEQGFEIRQLRAHLAQQDLDLAAERE). The segment at 380–477 (SASRSSVTRA…PELEHRVSLF (98 aa)) is disordered. Residues 382–397 (SRSSVTRAQSDSSQTL) show a composition bias toward low complexity. The span at 398-411 (GSSMDCSTAREEPS) shows a compositional bias: polar residues. Over residues 421–430 (LPSQQQVEEA) the composition is skewed to pro residues.

Homodimer; disulfide-linked. In terms of tissue distribution, mainly expressed in the cerebellum. Also expressed in cerebral cortex, skeletal muscle and thyroid, but at much lower levels.

The protein localises to the cell membrane. The protein resides in the cell projection. It is found in the dendrite. Its subcellular location is the perikaryon. Voltage-sensor protein present on the post-synaptic side of glutamatergic mossy fibers and granule cells in the cerebellum. Despite the presence of a voltage-sensor segment, does not form a functional ion channel and its precise role remains unclear. Undergoes both rapid and slow structural rearrangements in response to changes in voltage. Contains a zinc-binding site that can regulate the slow conformational transition. The protein is Transmembrane protein 266 of Homo sapiens (Human).